The sequence spans 803 residues: Dynein axonemal intermediate chain 4 (803 aa).

The segment covering 1–33 (MPSSPTSTRKQTNFTASVSAQSRKSISFGNPKS) has biased composition (polar residues). Disordered stretches follow at residues 1-41 (MPSS…GYAG), 88-109 (LYHP…SQEG), and 143-163 (STVS…LEDP). Residues 143 to 155 (STVSKSSISTTES) are compositionally biased toward low complexity. WD repeat units lie at residues 492-532 (QSPY…NTPV), 541-589 (KHLG…DCHD), 616-656 (SRQA…QYLE), 660-700 (GHKG…PFFT), 703-742 (PTTY…LDPL), and 748-787 (NPGI…TPTE).

As to quaternary structure, part of the multisubunit axonemal dynein complex formed at least of two heavy chains and a number of intermediate and light chains. Associated with axonemal dynein subunits such as, DNAH2, DNAI3, and DYNLT1. Interacts with DYNLT1.

It is found in the cytoplasm. It localises to the cytoskeleton. Its subcellular location is the flagellum axoneme. The protein localises to the cilium axoneme. The protein resides in the dynein axonemal particle. Its function is as follows. Plays a critical role in the assembly of axonemal dynein complex, thereby playing a role in ciliary motility. The sequence is that of Dynein axonemal intermediate chain 4 from Rattus norvegicus (Rat).